The chain runs to 254 residues: Type III pantothenate kinase (254 aa).

6–13 (DVGNTNTV) is a binding site for ATP. Residues tyrosine 100 and 107-110 (GADR) each bind substrate. Residue aspartate 109 is the Proton acceptor of the active site. K(+) is bound at residue aspartate 129. Threonine 132 is an ATP binding site. A substrate-binding site is contributed by threonine 184.

The protein belongs to the type III pantothenate kinase family. Homodimer. NH4(+) serves as cofactor. K(+) is required as a cofactor.

Its subcellular location is the cytoplasm. It carries out the reaction (R)-pantothenate + ATP = (R)-4'-phosphopantothenate + ADP + H(+). It functions in the pathway cofactor biosynthesis; coenzyme A biosynthesis; CoA from (R)-pantothenate: step 1/5. Catalyzes the phosphorylation of pantothenate (Pan), the first step in CoA biosynthesis. This is Type III pantothenate kinase from Anaeromyxobacter sp. (strain Fw109-5).